A 172-amino-acid polypeptide reads, in one-letter code: RNA silencing suppressor p19 (172 aa).

Residues 1 to 15 (MERAIQGNDAREQAY) are compositionally biased toward basic and acidic residues. Positions 1–38 (MERAIQGNDAREQAYGERWNGGPGGSTSPFQLPDESPS) are disordered.

Belongs to the tombusvirus protein p19 family. As to quaternary structure, homodimer.

Functionally, viral suppressor of RNA silencing which binds specifically to silencing RNAs (siRNAs). Acts as a molecular caliper to specifically select siRNAs based on the length of the duplex region of the RNA. The sequence is that of RNA silencing suppressor p19 from Tomato bushy stunt virus (strain A23) (TBSV).